A 133-amino-acid chain; its full sequence is UPF0292 protein TK1411 (133 aa).

Residues 20-100 (EGALIVEGLR…SVDIETWKEL (81 aa)) form the Toprim domain. 3 residues coordinate Mg(2+): Glu-26, Asp-69, and Asp-71.

It belongs to the UPF0292 family. Mg(2+) serves as cofactor.

This chain is UPF0292 protein TK1411, found in Thermococcus kodakarensis (strain ATCC BAA-918 / JCM 12380 / KOD1) (Pyrococcus kodakaraensis (strain KOD1)).